The sequence spans 215 residues: FMN-dependent NADH:quinone oxidoreductase 1 (215 aa).

This sequence belongs to the azoreductase type 1 family. In terms of assembly, homodimer. Requires FMN as cofactor.

The catalysed reaction is 2 a quinone + NADH + H(+) = 2 a 1,4-benzosemiquinone + NAD(+). It catalyses the reaction N,N-dimethyl-1,4-phenylenediamine + anthranilate + 2 NAD(+) = 2-(4-dimethylaminophenyl)diazenylbenzoate + 2 NADH + 2 H(+). Functionally, quinone reductase that provides resistance to thiol-specific stress caused by electrophilic quinones. In terms of biological role, also exhibits azoreductase activity. Catalyzes the reductive cleavage of the azo bond in aromatic azo compounds to the corresponding amines. In Lactiplantibacillus plantarum (strain ATCC BAA-793 / NCIMB 8826 / WCFS1) (Lactobacillus plantarum), this protein is FMN-dependent NADH:quinone oxidoreductase 1.